Consider the following 269-residue polypeptide: 3'(2'),5'-bisphosphate nucleotidase CysQ (269 aa).

Glu69, Asp89, Leu91, Asp92, and Asp216 together coordinate Mg(2+). Glu69 is a binding site for substrate. Residues 91 to 94 (LDGT) and Asp216 contribute to the substrate site.

It belongs to the inositol monophosphatase superfamily. CysQ family. The cofactor is Mg(2+).

Its subcellular location is the cell inner membrane. It catalyses the reaction adenosine 3',5'-bisphosphate + H2O = AMP + phosphate. In terms of biological role, converts adenosine-3',5'-bisphosphate (PAP) to AMP. This chain is 3'(2'),5'-bisphosphate nucleotidase CysQ, found in Haemophilus influenzae (strain ATCC 51907 / DSM 11121 / KW20 / Rd).